A 455-amino-acid chain; its full sequence is Zinc finger and BTB domain-containing protein 8A.2 (455 aa).

Residues 24-92 form the BTB domain; it reads CDCHIMIDGH…MYSGKLNLSG (69 aa). 2 consecutive C2H2-type zinc fingers follow at residues 299-321 and 327-350; these read FKCP…LLCH and YPCQ…RTIH.

The protein resides in the nucleus. May be involved in transcriptional regulation. The sequence is that of Zinc finger and BTB domain-containing protein 8A.2 (zbtb8a.2) from Xenopus tropicalis (Western clawed frog).